The sequence spans 165 residues: Large ribosomal subunit protein uL10 (165 aa).

Belongs to the universal ribosomal protein uL10 family. In terms of assembly, part of the ribosomal stalk of the 50S ribosomal subunit. The N-terminus interacts with L11 and the large rRNA to form the base of the stalk. The C-terminus forms an elongated spine to which L12 dimers bind in a sequential fashion forming a multimeric L10(L12)X complex.

In terms of biological role, forms part of the ribosomal stalk, playing a central role in the interaction of the ribosome with GTP-bound translation factors. This Halalkalibacterium halodurans (strain ATCC BAA-125 / DSM 18197 / FERM 7344 / JCM 9153 / C-125) (Bacillus halodurans) protein is Large ribosomal subunit protein uL10 (rplJ).